The primary structure comprises 653 residues: ATP-dependent zinc metalloprotease FtsH 1 (653 aa).

The Cytoplasmic segment spans residues 1–7 (MSRFFKS). Residues 8–28 (AAFPILIVVVLAFFAQRLINP) form a helical membrane-spanning segment. Residues 29 to 105 (GDSGPRYDYS…FDIEGTKSNG (77 aa)) lie on the Extracellular side of the membrane. The chain crosses the membrane as a helical span at residues 106 to 126 (WLSLLTYVLPFLIFIGFWIFL). The Cytoplasmic segment spans residues 127 to 653 (MNQVQGGGSK…MHFPERPELA (527 aa)). Residue 198–205 (GPPGTGKT) coordinates ATP. His-420 contacts Zn(2+). Glu-421 is an active-site residue. His-424 and Asp-496 together coordinate Zn(2+). The tract at residues 603-653 (EEVFGAEASPPPDVPLPPATERGRDTPRPLPRPGLAGGAAEMHFPERPELA) is disordered. The segment covering 611 to 620 (SPPPDVPLPP) has biased composition (pro residues).

In the central section; belongs to the AAA ATPase family. The protein in the C-terminal section; belongs to the peptidase M41 family. In terms of assembly, homohexamer. Requires Zn(2+) as cofactor.

The protein resides in the cell membrane. Functionally, acts as a processive, ATP-dependent zinc metallopeptidase for both cytoplasmic and membrane proteins. Plays a role in the quality control of integral membrane proteins. This chain is ATP-dependent zinc metalloprotease FtsH 1, found in Conexibacter woesei (strain DSM 14684 / CCUG 47730 / CIP 108061 / JCM 11494 / NBRC 100937 / ID131577).